A 243-amino-acid chain; its full sequence is Ribonuclease PH (243 aa).

Phosphate contacts are provided by residues Arg91 and 129 to 131; that span reads GTR.

This sequence belongs to the RNase PH family. Homohexameric ring arranged as a trimer of dimers.

It catalyses the reaction tRNA(n+1) + phosphate = tRNA(n) + a ribonucleoside 5'-diphosphate. Functionally, phosphorolytic 3'-5' exoribonuclease that plays an important role in tRNA 3'-end maturation. Removes nucleotide residues following the 3'-CCA terminus of tRNAs; can also add nucleotides to the ends of RNA molecules by using nucleoside diphosphates as substrates, but this may not be physiologically important. Probably plays a role in initiation of 16S rRNA degradation (leading to ribosome degradation) during starvation. This is Ribonuclease PH from Burkholderia pseudomallei (strain 668).